Reading from the N-terminus, the 372-residue chain is Glutamate 5-kinase (372 aa).

Position 14 (lysine 14) interacts with ATP. Residues serine 54, aspartate 141, and asparagine 153 each contribute to the substrate site. Residue 173 to 174 (TD) coordinates ATP. A PUA domain is found at 280 to 358 (RGTLTLDEGA…DEIEKLLGYV (79 aa)).

Belongs to the glutamate 5-kinase family.

The protein localises to the cytoplasm. The enzyme catalyses L-glutamate + ATP = L-glutamyl 5-phosphate + ADP. It functions in the pathway amino-acid biosynthesis; L-proline biosynthesis; L-glutamate 5-semialdehyde from L-glutamate: step 1/2. Catalyzes the transfer of a phosphate group to glutamate to form L-glutamate 5-phosphate. The sequence is that of Glutamate 5-kinase from Stutzerimonas stutzeri (strain A1501) (Pseudomonas stutzeri).